The sequence spans 71 residues: Small ribosomal subunit protein bS21 (71 aa).

The protein belongs to the bacterial ribosomal protein bS21 family.

The protein is Small ribosomal subunit protein bS21 of Blochmanniella floridana.